Reading from the N-terminus, the 1293-residue chain is Galactose/N-acetyl-D-galactosamine lectin heavy subunit 1 (1293 aa).

The signal sequence occupies residues 1–15; sequence MKLLLLNILLLCCLA. The Extracellular segment spans residues 16–1234; sequence DKLNEFSADI…NNVGAIAAAT (1219 aa). N95, N198, N234, N261, N337, N377, N390, N468, N487, N643, N659, N890, N992, N1138, N1204, and N1214 each carry an N-linked (GlcNAc...) asparagine glycan. Residues 1235-1255 form a helical membrane-spanning segment; sequence TVAVVVVAVVVALIVVSIGLF. At 1256-1293 the chain is on the cytoplasmic side; that stretch reads KTYQLVSSAMKNAITITNENAEYVGADNEATNAATFNG.

In terms of assembly, heterodimer composed of a 170 kDa heavy subunit (hgl) and a 31/35 kDa light subunit (lgl); disulfide-linked. In terms of processing, N-glycosylated.

The protein localises to the cell membrane. In terms of biological role, lectin which binds galactose and N-acetyl-D-galactosamine of host glycoproteins and thus mediates adhesion to host cells. Mediates adherence to host colonic mucins, an essential step for pathogenic tissue invasion. The sequence is that of Galactose/N-acetyl-D-galactosamine lectin heavy subunit 1 from Entamoeba histolytica (strain ATCC 30459 / HM-1:IMSS / ABRM).